The following is a 249-amino-acid chain: Adenosylcobinamide-GDP ribazoletransferase (249 aa).

The next 6 membrane-spanning stretches (helical) occupy residues 32 to 52 (MVAFPLAGTLIGGLVAATWFG), 53 to 73 (ATWLWGTTTGSLCAILTWGAI), 107 to 127 (IGTMGAIALISILLLKWLFVL), 136 to 156 (ALIVAPTLGRWVDIIGIFWFP), 190 to 210 (LLWWWAGLIFAVVIVATIIIA), and 224 to 244 (TYGALCEIAEMLVLAVVAALV).

It belongs to the CobS family. The cofactor is Mg(2+).

It is found in the cell membrane. The enzyme catalyses alpha-ribazole + adenosylcob(III)inamide-GDP = adenosylcob(III)alamin + GMP + H(+). It catalyses the reaction alpha-ribazole 5'-phosphate + adenosylcob(III)inamide-GDP = adenosylcob(III)alamin 5'-phosphate + GMP + H(+). It participates in cofactor biosynthesis; adenosylcobalamin biosynthesis; adenosylcobalamin from cob(II)yrinate a,c-diamide: step 7/7. Functionally, joins adenosylcobinamide-GDP and alpha-ribazole to generate adenosylcobalamin (Ado-cobalamin). Also synthesizes adenosylcobalamin 5'-phosphate from adenosylcobinamide-GDP and alpha-ribazole 5'-phosphate. This chain is Adenosylcobinamide-GDP ribazoletransferase, found in Herpetosiphon aurantiacus (strain ATCC 23779 / DSM 785 / 114-95).